The primary structure comprises 372 residues: Ciliary neurotrophic factor receptor subunit alpha (372 aa).

An N-terminal signal peptide occupies residues 1–22 (MAASVPWACCAVLAAAAAAVYT). The 78-residue stretch at 27–104 (PQEAPHVQYE…WHLRHQVLLH (78 aa)) folds into the Ig-like C2-type domain. An intrachain disulfide couples Cys46 to Cys89. N-linked (GlcNAc...) asparagine glycosylation is found at Asn60, Asn70, Asn142, and Asn190. Fibronectin type-III domains lie at 108–205 (PPRE…VKPD) and 206–306 (PPEN…TEEP). The WSXWS motif signature appears at 290–294 (WSDWS). Residues 301–338 (PWTEEPRHLTTEAQAPETTTSTTSSLAPPPTTKICDPG) form a disordered region. Low complexity predominate over residues 311–326 (TEAQAPETTTSTTSSL). A lipid anchor (GPI-anchor amidated serine) is attached at Ser342. A propeptide spans 343–372 (GGGPSILFLTSVPVTLVLAAAAATANNLLI) (removed in mature form).

Belongs to the type I cytokine receptor family. Type 3 subfamily. Forms a heterotrimer with LIFR and IL6ST. Interacts with heterodimeric neurotropic cytokine composed of CLCF1/CLC and CRLF1/CLF-1. Either alone or in complex with the heterodimer CLCF1-CRLF1 interacts with SORL1; this interaction may promote internalization and lysosomal degradation.

It is found in the cell membrane. Binds to CNTF. The alpha subunit provides the receptor specificity. This is Ciliary neurotrophic factor receptor subunit alpha (Cntfr) from Mus musculus (Mouse).